Here is a 68-residue protein sequence, read N- to C-terminus: Small ribosomal subunit protein bS21 (68 aa).

The protein belongs to the bacterial ribosomal protein bS21 family.

This Ruegeria sp. (strain TM1040) (Silicibacter sp.) protein is Small ribosomal subunit protein bS21.